A 319-amino-acid chain; its full sequence is Probable deoxyhypusine synthase (319 aa).

Residue Lys287 is the Nucleophile of the active site.

The protein belongs to the deoxyhypusine synthase family. The cofactor is NAD(+).

The enzyme catalyses [eIF5A protein]-L-lysine + spermidine = [eIF5A protein]-deoxyhypusine + propane-1,3-diamine. The protein operates within protein modification; eIF5A hypusination. Catalyzes the NAD-dependent oxidative cleavage of spermidine and the subsequent transfer of the butylamine moiety of spermidine to the epsilon-amino group of a specific lysine residue of the eIF-5A precursor protein to form the intermediate deoxyhypusine residue. This Ignicoccus hospitalis (strain KIN4/I / DSM 18386 / JCM 14125) protein is Probable deoxyhypusine synthase.